Consider the following 404-residue polypeptide: Cysteine desulfurase IscS (404 aa).

Residues 75 to 76, asparagine 155, glutamine 183, and 203 to 205 contribute to the pyridoxal 5'-phosphate site; these read AT and SAH. Lysine 206 is subject to N6-(pyridoxal phosphate)lysine. Position 243 (threonine 243) interacts with pyridoxal 5'-phosphate. Cysteine 328 (cysteine persulfide intermediate) is an active-site residue. [2Fe-2S] cluster is bound at residue cysteine 328.

It belongs to the class-V pyridoxal-phosphate-dependent aminotransferase family. NifS/IscS subfamily. As to quaternary structure, homodimer. Forms a heterotetramer with IscU, interacts with other sulfur acceptors. Pyridoxal 5'-phosphate is required as a cofactor.

The protein localises to the cytoplasm. The catalysed reaction is (sulfur carrier)-H + L-cysteine = (sulfur carrier)-SH + L-alanine. It participates in cofactor biosynthesis; iron-sulfur cluster biosynthesis. Functionally, master enzyme that delivers sulfur to a number of partners involved in Fe-S cluster assembly, tRNA modification or cofactor biosynthesis. Catalyzes the removal of elemental sulfur atoms from cysteine to produce alanine. Functions as a sulfur delivery protein for Fe-S cluster synthesis onto IscU, an Fe-S scaffold assembly protein, as well as other S acceptor proteins. In Shewanella piezotolerans (strain WP3 / JCM 13877), this protein is Cysteine desulfurase IscS.